Consider the following 965-residue polypeptide: Calsyntenin-2 (965 aa).

A signal peptide spans 1–20; sequence MLPGRLCLVPLLLALGVGSG. At 21 to 835 the chain is on the extracellular side; it reads GGSGDGGDSR…SIQRSSVVPS (815 aa). Cadherin domains are found at residues 46–162 and 163–282; these read IETS…APTF and KEPA…MPLF. 2 N-linked (GlcNAc...) asparagine glycosylation sites follow: Asn-58 and Asn-100. N-linked (GlcNAc...) asparagine glycosylation is found at Asn-344, Asn-376, Asn-720, and Asn-733. The helical transmembrane segment at 836–856 threads the bilayer; the sequence is IATVVIIISVCMLVFVVAMGV. Residues 857–965 lie on the Cytoplasmic side of the membrane; sequence YRVRIAHQHF…NTAGVINIWK (109 aa). The tract at residues 891–965 is disordered; that stretch reads PMEKHEGPGH…NTAGVINIWK (75 aa). Basic and acidic residues predominate over residues 892 to 902; the sequence is MEKHEGPGHGE. The segment covering 903 to 915 has biased composition (acidic residues); that stretch reads DETEGEEEEEAEE. Polar residues predominate over residues 942-959; sequence QSGTSSQRPERSTWNTAG.

This sequence belongs to the calsyntenin family. In terms of processing, proteolytically processed under normal cellular conditions. A primary zeta-cleavage generates a large extracellular (soluble) N-terminal domain (sAlc) and a short C-terminal transmembrane fragment (CTF1). A secondary cleavage catalyzed by gamma-secretase within the transmembrane domain releases the beta-Alc-gamma chain in the extracellular milieu and produces an intracellular fragment (AlcICD). This processing is strongly suppressed in the tripartite complex formed with APBA2 and APP, which seems to prevent the association with PSEN1.

Its subcellular location is the postsynaptic cell membrane. The protein localises to the endoplasmic reticulum membrane. It localises to the golgi apparatus membrane. The protein resides in the cell projection. It is found in the dendrite. Functionally, postsynaptic adhesion molecule that binds to presynaptic neurexins to mediate synapse formation, and which is involved in learning and memory. Promotes synapse development by acting as a cell adhesion molecule at the postsynaptic membrane, which associates with neurexin-alpha at the presynaptic membrane. The polypeptide is Calsyntenin-2 (Rattus norvegicus (Rat)).